The sequence spans 552 residues: 5'-AMP-activated protein kinase catalytic subunit alpha-2 (552 aa).

One can recognise a Protein kinase domain in the interval 16–268; that stretch reads YVLGDTLGVG…IKDIREHEWF (253 aa). ATP-binding positions include 22–30 and lysine 45; that span reads LGVGTFGKV. The Proton acceptor role is filled by aspartate 139. Threonine 172 carries the post-translational modification Phosphothreonine; by LKB1 and CaMKK2. Threonine 258 carries the phosphothreonine modification. The tract at residues 291–376 is AIS; that stretch reads EAVKEVCEKF…PERMPPLIAD (86 aa). Serine 377 is modified (phosphoserine). The disordered stretch occupies residues 477–521; sequence VEQRSGSSTPQRSCSAAGLHRPRSSFDSTTAESHSLSGSLTGSLT. Residues 480-490 are compositionally biased toward polar residues; that stretch reads RSGSSTPQRSC. Position 491 is a phosphoserine (serine 491). The segment covering 501 to 510 has biased composition (polar residues); sequence SFDSTTAESH. The segment covering 511-521 has biased composition (low complexity); the sequence is SLSGSLTGSLT.

This sequence belongs to the protein kinase superfamily. CAMK Ser/Thr protein kinase family. SNF1 subfamily. In terms of assembly, AMPK is a heterotrimer of an alpha catalytic subunit (PRKAA1 or PRKAA2), a beta (PRKAB1 or PRKAB2) and a gamma non-catalytic subunits (PRKAG1, PRKAG2 or PRKAG3). Interacts with FNIP1 and FNIP2. Interacts with DUSP29. Interacts with ARF6. The phosphorylated form at Thr-172 mediated by CamKK2 interacts with ACSS2. Requires Mg(2+) as cofactor. Ubiquitinated. In terms of processing, phosphorylated at Thr-172 by STK11/LKB1 in complex with STE20-related adapter-alpha (STRADA) pseudo kinase and CAB39. Also phosphorylated at Thr-172 by CAMKK2; triggered by a rise in intracellular calcium ions, without detectable changes in the AMP/ATP ratio. CAMKK1 can also phosphorylate Thr-172, but at much lower level. Dephosphorylated by protein phosphatase 2A and 2C (PP2A and PP2C). Phosphorylated by ULK1; leading to negatively regulate AMPK activity and suggesting the existence of a regulatory feedback loop between ULK1 and AMPK. Dephosphorylated by PPM1A and PPM1B at Thr-172 (mediated by STK11/LKB1).

The protein resides in the cytoplasm. The protein localises to the nucleus. The enzyme catalyses L-seryl-[protein] + ATP = O-phospho-L-seryl-[protein] + ADP + H(+). It catalyses the reaction L-threonyl-[protein] + ATP = O-phospho-L-threonyl-[protein] + ADP + H(+). It carries out the reaction L-seryl-[acetyl-CoA carboxylase] + ATP = O-phospho-L-seryl-[acetyl-CoA carboxylase] + ADP + H(+). The catalysed reaction is L-seryl-[3-hydroxy-3-methylglutaryl-coenzyme A reductase] + ATP = O-phospho-L-seryl-[3-hydroxy-3-methylglutaryl-coenzyme A reductase] + ADP + H(+). With respect to regulation, activated by phosphorylation on Thr-172. Binding of AMP to non-catalytic gamma subunit (PRKAG1, PRKAG2 or PRKAG3) results in allosteric activation, inducing phosphorylation on Thr-172. AMP-binding to gamma subunit also sustains activity by preventing dephosphorylation of Thr-172. ADP also stimulates Thr-172 phosphorylation, without stimulating already phosphorylated AMPK. ATP promotes dephosphorylation of Thr-172, rendering the enzyme inactive. Under physiological conditions AMPK mainly exists in its inactive form in complex with ATP, which is much more abundant than AMP. Selectively inhibited by compound C (6-[4-(2-Piperidin-1-yl-ethoxy)-phenyl)]-3-pyridin-4-yl-pyyrazolo[1,5-a] pyrimidine. Activated by resveratrol, a natural polyphenol present in red wine, and S17834, a synthetic polyphenol. Salicylate/aspirin directly activates kinase activity, primarily by inhibiting Thr-172 dephosphorylation. In terms of biological role, catalytic subunit of AMP-activated protein kinase (AMPK), an energy sensor protein kinase that plays a key role in regulating cellular energy metabolism. In response to reduction of intracellular ATP levels, AMPK activates energy-producing pathways and inhibits energy-consuming processes: inhibits protein, carbohydrate and lipid biosynthesis, as well as cell growth and proliferation. AMPK acts via direct phosphorylation of metabolic enzymes, and by longer-term effects via phosphorylation of transcription regulators. Regulates lipid synthesis by phosphorylating and inactivating lipid metabolic enzymes such as ACACA, ACACB, GYS1, HMGCR and LIPE; regulates fatty acid and cholesterol synthesis by phosphorylating acetyl-CoA carboxylase (ACACA and ACACB) and hormone-sensitive lipase (LIPE) enzymes, respectively. Promotes lipolysis of lipid droplets by mediating phosphorylation of isoform 1 of CHKA (CHKalpha2). Regulates insulin-signaling and glycolysis by phosphorylating IRS1, PFKFB2 and PFKFB3. Involved in insulin receptor/INSR internalization. AMPK stimulates glucose uptake in muscle by increasing the translocation of the glucose transporter SLC2A4/GLUT4 to the plasma membrane, possibly by mediating phosphorylation of TBC1D4/AS160. Regulates transcription and chromatin structure by phosphorylating transcription regulators involved in energy metabolism such as CRTC2/TORC2, FOXO3, histone H2B, HDAC5, MEF2C, MLXIPL/ChREBP, EP300, HNF4A, p53/TP53, SREBF1, SREBF2 and PPARGC1A. Acts as a key regulator of glucose homeostasis in liver by phosphorylating CRTC2/TORC2, leading to CRTC2/TORC2 sequestration in the cytoplasm. In response to stress, phosphorylates 'Ser-36' of histone H2B (H2BS36ph), leading to promote transcription. Acts as a key regulator of cell growth and proliferation by phosphorylating FNIP1, TSC2, RPTOR, WDR24 and ATG1/ULK1: in response to nutrient limitation, negatively regulates the mTORC1 complex by phosphorylating RPTOR component of the mTORC1 complex and by phosphorylating and activating TSC2. Also phosphorylates and inhibits GATOR2 subunit WDR24 in response to nutrient limitation, leading to suppress glucose-mediated mTORC1 activation. In response to energetic stress, phosphorylates FNIP1, inactivating the non-canonical mTORC1 signaling, thereby promoting nuclear translocation of TFEB and TFE3, and inducing transcription of lysosomal or autophagy genes. In response to nutrient limitation, promotes autophagy by phosphorylating and activating ATG1/ULK1. In that process also activates WDR45/WIPI4. Phosphorylates CASP6, thereby preventing its autoprocessing and subsequent activation. AMPK also acts as a regulator of circadian rhythm by mediating phosphorylation of CRY1, leading to destabilize it. May regulate the Wnt signaling pathway by phosphorylating CTNNB1, leading to stabilize it. Also acts as a regulator of cellular polarity by remodeling the actin cytoskeleton; probably by indirectly activating myosin. Also phosphorylates CFTR, EEF2K, KLC1, NOS3 and SLC12A1. Plays an important role in the differential regulation of pro-autophagy (composed of PIK3C3, BECN1, PIK3R4 and UVRAG or ATG14) and non-autophagy (composed of PIK3C3, BECN1 and PIK3R4) complexes, in response to glucose starvation. Can inhibit the non-autophagy complex by phosphorylating PIK3C3 and can activate the pro-autophagy complex by phosphorylating BECN1. Upon glucose starvation, promotes ARF6 activation in a kinase-independent manner leading to cell migration. Upon glucose deprivation mediates the phosphorylation of ACSS2 at 'Ser-659', which exposes the nuclear localization signal of ACSS2, required for its interaction with KPNA1 and nuclear translocation. Upon stress, regulates mitochondrial fragmentation through phosphorylation of MTFR1L. The chain is 5'-AMP-activated protein kinase catalytic subunit alpha-2 (PRKAA2) from Pongo abelii (Sumatran orangutan).